Reading from the N-terminus, the 146-residue chain is Angiogenin (146 aa).

The N-terminal stretch at 1 to 24 (MVMGLGLFLLVFMLGLGLTPPTLA) is a signal peptide. Q25 is subject to Pyrrolidone carboxylic acid. H37 serves as the catalytic Proton acceptor. R45 lines the tRNA pocket. Disulfide bonds link C50–C105, C63–C116, and C81–C131. A Nucleolar localization signal motif is present at residues 55–59 (RRRGL). Positions 105 and 127 each coordinate tRNA. Residue H138 is the Proton donor of the active site.

This sequence belongs to the pancreatic ribonuclease family. Homodimer. Interacts with RNH1; inhibiting ANG ribonuclease activity. Interacts with PCNA.

Its subcellular location is the secreted. It is found in the nucleus. The protein resides in the nucleolus. It localises to the cytoplasm. The protein localises to the stress granule. Its activity is regulated as follows. Has weak tRNA ribonuclease activity by itself due to partial autoinhibition by its C-terminus, which folds into a short alpha-helix that partially occludes the substrate-binding site. In absence of stress, the ribonuclease activity is inhibited by RNH1 in the cytoplasm. In response to stress, dissociates from RNH1 in the cytoplasm and associates with cytoplasmic ribosomes with vacant A-sites: ribosomes directly activate the tRNA ribonuclease activity of ANG by refolding the C-terminal alpha-helix. In response to stress, the angiogenic activity of ANG is inhibited by RNH1 in the nucleus. Secreted ribonuclease that can either promote or restrict cell proliferation of target cells, depending on the context. Endocytosed in target cells via its receptor PLXNB2 and translocates to the cytoplasm or nucleus. Under stress conditions, localizes to the cytoplasm and promotes the assembly of stress granules (SGs): specifically cleaves a subset of tRNAs within anticodon loops to produce tRNA-derived stress-induced fragments (tiRNAs), resulting in translation repression and inhibition of cell proliferation. tiRNas also prevent formation of apoptosome, thereby promoting cell survival. Preferentially cleaves RNAs between a pyrimidine and an adenosine residue, suggesting that it cleaves the anticodon loop of tRNA(Ala) (32-UUAGCAU-38) after positions 33 and 36. Cleaves a subset of tRNAs, including tRNA(Ala), tRNA(Glu), tRNA(Gly), tRNA(Lys), tRNA(Val), tRNA(His), tRNA(Asp) and tRNA(Sec). Under growth conditions and in differentiated cells, translocates to the nucleus and stimulates ribosomal RNA (rRNA) transcription, including that containing the initiation site sequences of 45S rRNA, thereby promoting cell growth and proliferation. Angiogenin induces vascularization of normal and malignant tissues via its ability to promote rRNA transcription. Involved in hematopoietic stem and progenitor cell (HSPC) growth and survival by promoting rRNA transcription in growth conditions and inhibiting translation in response to stress, respectively. Mediates the crosstalk between myeloid and intestinal epithelial cells to protect the intestinal epithelial barrier integrity: secreted by myeloid cells and promotes intestinal epithelial cells proliferation and survival. Also mediates osteoclast-endothelial cell crosstalk in growing bone: produced by osteoclasts and protects the neighboring vascular cells against senescence by promoting rRNA transcription. In Trachypithecus francoisi (Francois' leaf monkey), this protein is Angiogenin (ANG).